Here is a 286-residue protein sequence, read N- to C-terminus: Bifunctional protein FolD (286 aa).

NADP(+) contacts are provided by residues 165-167 and Ser-190; that span reads GRS.

This sequence belongs to the tetrahydrofolate dehydrogenase/cyclohydrolase family. In terms of assembly, homodimer.

It catalyses the reaction (6R)-5,10-methylene-5,6,7,8-tetrahydrofolate + NADP(+) = (6R)-5,10-methenyltetrahydrofolate + NADPH. The enzyme catalyses (6R)-5,10-methenyltetrahydrofolate + H2O = (6R)-10-formyltetrahydrofolate + H(+). It functions in the pathway one-carbon metabolism; tetrahydrofolate interconversion. Functionally, catalyzes the oxidation of 5,10-methylenetetrahydrofolate to 5,10-methenyltetrahydrofolate and then the hydrolysis of 5,10-methenyltetrahydrofolate to 10-formyltetrahydrofolate. This chain is Bifunctional protein FolD, found in Burkholderia orbicola (strain MC0-3).